We begin with the raw amino-acid sequence, 436 residues long: MPDRAQVIIRIVPGGGTKTLQQIINQLEYLSRKGKLELQRSARHLDIPLPPDQIHELARSWVQETGTYDESQPDEERQQELTTHIIVSFPAGTSQAAAYAASREWAAEMFGSGAGGGSYNYLTAFHIDRDHPHLHVVVNRRELLGHGWLKISRRHPQLNYDALRINMAEISLRHGIVLDASSRAERGIFERPITYAQFRRLERQARQIRFEDADLEQSSSQGDHPEFSQSPDTAPFEASAGRSEGMPYPNNRQNGSQVHLHEPAGFSNRAGGSVRIALETQRLAIFADDIESGSPPVSDVRAGNANADSDLPRSTVARTTDYSQRWSKRPRDDDEGPSGAKRVRLEGMAVGPEANAGERDSRGDPVAPPAETSRPSSLQDMARPNTATDPLAASGHLEQRRGTLSKRPRVEDDGEPSERKRARDDRSQDGRGGNRR.

Disordered stretches follow at residues 213 to 266 and 290 to 436; these read ADLE…PAGF and IESG…GNRR. 2 stretches are compositionally biased toward polar residues: residues 216–232 and 316–325; these read EQSS…QSPD and VARTTDYSQR. Over residues 408-429 the composition is skewed to basic and acidic residues; the sequence is PRVEDDGEPSERKRARDDRSQD.

Its function is as follows. Tumor formation by A.tumefaciens involves the transfer and integration of a defined segment (T-DNA) of Ti plasmid DNA into the plant nuclear genome. The virD operon encodes a site-specific endonuclease that cleaves at a unique site within both 24 bp direct repeats flanking the T-DNA. The chain is T-DNA border endonuclease VirD2 (virD2) from Rhizobium rhizogenes (Agrobacterium rhizogenes).